The chain runs to 343 residues: N-acetyl-gamma-glutamyl-phosphate reductase (343 aa).

The active site involves Cys146.

This sequence belongs to the NAGSA dehydrogenase family. Type 1 subfamily.

It localises to the cytoplasm. It catalyses the reaction N-acetyl-L-glutamate 5-semialdehyde + phosphate + NADP(+) = N-acetyl-L-glutamyl 5-phosphate + NADPH + H(+). Its pathway is amino-acid biosynthesis; L-arginine biosynthesis; N(2)-acetyl-L-ornithine from L-glutamate: step 3/4. In terms of biological role, catalyzes the NADPH-dependent reduction of N-acetyl-5-glutamyl phosphate to yield N-acetyl-L-glutamate 5-semialdehyde. This is N-acetyl-gamma-glutamyl-phosphate reductase from Arthrobacter sp. (strain FB24).